The sequence spans 439 residues: ATP-dependent RNA helicase RhlB (439 aa).

Positions 9–37 (QKFADLPLCDEVKQALNENGFEHCTPIQA) match the Q motif motif. The region spanning 40-219 (LPVLLEKKDI…YDHMNDPVKV (180 aa)) is the Helicase ATP-binding domain. 53-60 (AQTGTGKT) lines the ATP pocket. A DEAD box motif is present at residues 165-168 (DEAD). The Helicase C-terminal domain occupies 243-390 (KLKLLHSLIE…VTSYDRDALI (148 aa)). The interval 394–439 (PPVKIHRKPHAGGRNLRDRNGSPRPSGSHRSGSGRPPRHDRTRRHS) is disordered. Residues 415-428 (SPRPSGSHRSGSGR) are compositionally biased toward low complexity. Residues 429-439 (PPRHDRTRRHS) are compositionally biased toward basic residues.

Belongs to the DEAD box helicase family. RhlB subfamily. In terms of assembly, component of the RNA degradosome, which is a multiprotein complex involved in RNA processing and mRNA degradation.

The protein resides in the cytoplasm. It carries out the reaction ATP + H2O = ADP + phosphate + H(+). Functionally, DEAD-box RNA helicase involved in RNA degradation. Has RNA-dependent ATPase activity and unwinds double-stranded RNA. The chain is ATP-dependent RNA helicase RhlB from Shewanella amazonensis (strain ATCC BAA-1098 / SB2B).